A 140-amino-acid polypeptide reads, in one-letter code: Large ribosomal subunit protein uL11 (140 aa).

This sequence belongs to the universal ribosomal protein uL11 family. In terms of assembly, part of the ribosomal stalk of the 50S ribosomal subunit. Interacts with L10 and the large rRNA to form the base of the stalk. L10 forms an elongated spine to which L12 dimers bind in a sequential fashion forming a multimeric L10(L12)X complex. In terms of processing, one or more lysine residues are methylated.

In terms of biological role, forms part of the ribosomal stalk which helps the ribosome interact with GTP-bound translation factors. In Enterococcus faecalis (strain ATCC 700802 / V583), this protein is Large ribosomal subunit protein uL11.